Here is a 209-residue protein sequence, read N- to C-terminus: Na(+)-translocating NADH-quinone reductase subunit D (209 aa).

A run of 5 helical transmembrane segments spans residues 42 to 62 (LVMT…ISLI), 66 to 86 (IPGS…VIVV), 103 to 123 (VFVG…AYAM), 131 to 151 (FMDG…VGFL), and 178 to 198 (NGLF…IWGL).

Belongs to the NqrDE/RnfAE family. In terms of assembly, composed of six subunits; NqrA, NqrB, NqrC, NqrD, NqrE and NqrF.

The protein resides in the cell inner membrane. The catalysed reaction is a ubiquinone + n Na(+)(in) + NADH + H(+) = a ubiquinol + n Na(+)(out) + NAD(+). Its function is as follows. NQR complex catalyzes the reduction of ubiquinone-1 to ubiquinol by two successive reactions, coupled with the transport of Na(+) ions from the cytoplasm to the periplasm. NqrA to NqrE are probably involved in the second step, the conversion of ubisemiquinone to ubiquinol. This is Na(+)-translocating NADH-quinone reductase subunit D from Proteus mirabilis (strain HI4320).